The chain runs to 274 residues: Large ribosomal subunit protein uL2 (274 aa).

The disordered stretch occupies residues 221–274; the sequence is RGTAMNPVDHPHGGGEGKNFGKHPVTPWGVQTKGKKTRSNKRTDKFIVRRRSKK.

This sequence belongs to the universal ribosomal protein uL2 family. In terms of assembly, part of the 50S ribosomal subunit. Forms a bridge to the 30S subunit in the 70S ribosome.

Functionally, one of the primary rRNA binding proteins. Required for association of the 30S and 50S subunits to form the 70S ribosome, for tRNA binding and peptide bond formation. It has been suggested to have peptidyltransferase activity; this is somewhat controversial. Makes several contacts with the 16S rRNA in the 70S ribosome. This chain is Large ribosomal subunit protein uL2, found in Serratia proteamaculans (strain 568).